Here is a 353-residue protein sequence, read N- to C-terminus: UDP-N-acetylglucosamine--N-acetylmuramyl-(pentapeptide) pyrophosphoryl-undecaprenol N-acetylglucosamine transferase (353 aa).

UDP-N-acetyl-alpha-D-glucosamine is bound by residues 10–12 (TGG), N124, S183, and Q283.

This sequence belongs to the glycosyltransferase 28 family. MurG subfamily.

It is found in the cell inner membrane. The catalysed reaction is di-trans,octa-cis-undecaprenyl diphospho-N-acetyl-alpha-D-muramoyl-L-alanyl-D-glutamyl-meso-2,6-diaminopimeloyl-D-alanyl-D-alanine + UDP-N-acetyl-alpha-D-glucosamine = di-trans,octa-cis-undecaprenyl diphospho-[N-acetyl-alpha-D-glucosaminyl-(1-&gt;4)]-N-acetyl-alpha-D-muramoyl-L-alanyl-D-glutamyl-meso-2,6-diaminopimeloyl-D-alanyl-D-alanine + UDP + H(+). It participates in cell wall biogenesis; peptidoglycan biosynthesis. Its function is as follows. Cell wall formation. Catalyzes the transfer of a GlcNAc subunit on undecaprenyl-pyrophosphoryl-MurNAc-pentapeptide (lipid intermediate I) to form undecaprenyl-pyrophosphoryl-MurNAc-(pentapeptide)GlcNAc (lipid intermediate II). This Helicobacter pylori (strain Shi470) protein is UDP-N-acetylglucosamine--N-acetylmuramyl-(pentapeptide) pyrophosphoryl-undecaprenol N-acetylglucosamine transferase.